The primary structure comprises 468 residues: MAKTLYEKVFDAHVVYEGKNELPILYIDRHLIHEVTSPQAFSGLKMAKRRMARADLTLATIDHDVSTKSIDLNACSDMAKEQITTLMQNTKEFGVRLLGLGDKNQGIVHIVGPELGFTLPGVTLVCGDSHTATHGAFGALAFGIGTSEVEHVMATQTLKQAKLKTMKIECKGQFQKGVYAKDLILYLIAQYGTAKGTGYAIEFCGELIRKLSMEARMTLCNMAIEFGAKVGMIAPDEITFEYIKGKEFAPKGEEFQKYCEYWKSLRSDEGAKYDESITLDVSKIKPQISYGTNPSQVIGIDEKIPKISDFKNQSEQKSLLDALSYVNLEQDQVIEGVKIDIVFIGSCTNGRLEDLKIAADILKGHKIHKNVKALIVPGSMQVRKEAENLGLDKIFIEAGCEWRYAGCSMCLGMNDDKANSGQRVASTSNRNFVGRQGKGSITHLMSPASAAACAIEGVICDNRKYLGV.

3 residues coordinate [4Fe-4S] cluster: Cys347, Cys407, and Cys410.

The protein belongs to the aconitase/IPM isomerase family. LeuC type 1 subfamily. In terms of assembly, heterodimer of LeuC and LeuD. It depends on [4Fe-4S] cluster as a cofactor.

The catalysed reaction is (2R,3S)-3-isopropylmalate = (2S)-2-isopropylmalate. It functions in the pathway amino-acid biosynthesis; L-leucine biosynthesis; L-leucine from 3-methyl-2-oxobutanoate: step 2/4. Catalyzes the isomerization between 2-isopropylmalate and 3-isopropylmalate, via the formation of 2-isopropylmaleate. The protein is 3-isopropylmalate dehydratase large subunit of Campylobacter jejuni subsp. jejuni serotype O:6 (strain 81116 / NCTC 11828).